We begin with the raw amino-acid sequence, 403 residues long: Putative gustatory receptor 98b (403 aa).

Topologically, residues 1–11 (MVAQKSRLLAR) are cytoplasmic. The chain crosses the membrane as a helical span at residues 12-32 (AFPYLDIFSVFALTPPPQSFG). Residues 33 to 48 (HTPHRRLRWYLMTGYV) lie on the Extracellular side of the membrane. The helical transmembrane segment at 49–69 (FYATAILATVFIVSYFNIIAI) threads the bilayer. At 70 to 83 (DEEVLEYNVSDFTR) the chain is on the cytoplasmic side. Residues 84–104 (VMGNIQKSLYSIMAIANHLNM) traverse the membrane as a helical segment. The Extracellular portion of the chain corresponds to 105 to 144 (LINYRRLGGIYKDIADLEMDMDEASQCFGGQRQRFSFRFR). Residues 145–165 (MALCVGVWMILMVGSMPRLTM) form a helical membrane-spanning segment. Over 166–191 (TAMGPFVSTLLKILTEFVMIMQQLKS) the chain is Cytoplasmic. The helical transmembrane segment at 192 to 212 (LEYCVFVLIIYELVLRLRRTL) threads the bilayer. The Extracellular portion of the chain corresponds to 213–259 (SQLQEEFQDCEQQDMLQALCVALKRNQLLLGRIWRLEGDVGSYFTPT). A helical transmembrane segment spans residues 260–280 (MLLLFLYNGLTILHMVNWAYI). Residues 281–365 (NKFLYDSCCQ…LRFTCGGLFD (85 aa)) are Cytoplasmic-facing. A helical membrane pass occupies residues 366-386 (INLKYFGGLLVTIFGYIIILI). Topologically, residues 387 to 403 (QFKVQAIAANRYKKVVN) are extracellular.

This sequence belongs to the insect chemoreceptor superfamily. Gustatory receptor (GR) family. Gr2a subfamily.

The protein localises to the cell membrane. Its function is as follows. Probable gustatory receptor which mediates acceptance or avoidance behavior, depending on its substrates. This Drosophila melanogaster (Fruit fly) protein is Putative gustatory receptor 98b (Gr98b).